Reading from the N-terminus, the 874-residue chain is Interleukin-12 receptor subunit beta-2 (874 aa).

An N-terminal signal peptide occupies residues 1-23 (MAQTVRECSLALLFLFMWLLIKA). At 24 to 637 (NIDVCKLGTV…REFCPQGKAN (614 aa)) the chain is on the extracellular side. Residues Asn-48, Asn-101, Asn-114, Asn-142, Asn-151, Asn-169, Asn-179, Asn-224, Asn-252, Asn-279, Asn-287, Asn-323, Asn-391, and Asn-495 are each glycosylated (N-linked (GlcNAc...) asparagine). Fibronectin type-III domains are found at residues 139-237 (PPQN…FLDI), 242-335 (PPWD…TPEE), 336-430 (EPVG…NIVD), 438-530 (APHQ…IRGD), and 536-635 (PVSG…PQGK). The WSXWS motif signature appears at 321-325 (WSNWS). Residues 638 to 658 (WKAFVISSICIAIITVGTFSI) form a helical membrane-spanning segment. The Cytoplasmic segment spans residues 659–874 (RYFRQKAFTL…GYDSLMSNEA (216 aa)). The Box 1 motif motif lies at 677–685 (YSRTIPDPA). A phosphotyrosine mark is found at Tyr-757, Tyr-804, and Tyr-811.

This sequence belongs to the type I cytokine receptor family. Type 2 subfamily. In terms of assembly, heterodimer/heterooligomer; disulfide-linked. The functional high affinity IL12 receptor is composed of I12RB1 and IL12RB2. Il12RB2 binds JAK2 (via its N-terminal) through a membrane-proximal region of the cytoplasmic domain. In terms of processing, on IL12 stimulation, phosphorylated on C-terminal tyrosine residues. Phosphorylation of any one of Tyr-757, Tyr-804 or Tyr-811 can activate STAT4, IFN-gamma production, and T-cell proliferation. Tyr-811 is the dominant site of cell proliferation. Expressed in developing T-helper (TH) cells.

The protein localises to the membrane. In terms of biological role, receptor for interleukin-12. This subunit is the signaling component coupling to the JAK2/STAT4 pathway. Promotes the proliferation of T-cells as well as NK cells. Induces the promotion of T-cells towards the Th1 phenotype by strongly enhancing IFN-gamma production. Can also activate STAT3. In Mus musculus (Mouse), this protein is Interleukin-12 receptor subunit beta-2 (Il12rb2).